The sequence spans 467 residues: Glutamate--tRNA ligase (467 aa).

The 'HIGH' region motif lies at 9-19 (PSPTGYLHIGG). Residues 237–241 (KLSKR) carry the 'KMSKS' region motif. K240 serves as a coordination point for ATP.

The protein belongs to the class-I aminoacyl-tRNA synthetase family. Glutamate--tRNA ligase type 1 subfamily. As to quaternary structure, monomer.

Its subcellular location is the cytoplasm. The enzyme catalyses tRNA(Glu) + L-glutamate + ATP = L-glutamyl-tRNA(Glu) + AMP + diphosphate. In terms of biological role, catalyzes the attachment of glutamate to tRNA(Glu) in a two-step reaction: glutamate is first activated by ATP to form Glu-AMP and then transferred to the acceptor end of tRNA(Glu). In Xylella fastidiosa (strain 9a5c), this protein is Glutamate--tRNA ligase.